A 149-amino-acid chain; its full sequence is UPF0260 protein Pfl01_1392 (149 aa).

Belongs to the UPF0260 family.

The chain is UPF0260 protein Pfl01_1392 from Pseudomonas fluorescens (strain Pf0-1).